A 274-amino-acid polypeptide reads, in one-letter code: Shikimate dehydrogenase (NADP(+)) (274 aa).

Shikimate-binding positions include 14 to 16 (SKS) and Thr-60. Lys-64 acts as the Proton acceptor in catalysis. Residue Glu-76 participates in NADP(+) binding. Asn-85 and Asp-101 together coordinate shikimate. Residues 126–130 (GAGGA), 150–155 (NRTAEK), and Met-214 each bind NADP(+). Tyr-216 provides a ligand contact to shikimate. Residue Gly-238 participates in NADP(+) binding.

It belongs to the shikimate dehydrogenase family. As to quaternary structure, homodimer.

The catalysed reaction is shikimate + NADP(+) = 3-dehydroshikimate + NADPH + H(+). It participates in metabolic intermediate biosynthesis; chorismate biosynthesis; chorismate from D-erythrose 4-phosphate and phosphoenolpyruvate: step 4/7. Functionally, involved in the biosynthesis of the chorismate, which leads to the biosynthesis of aromatic amino acids. Catalyzes the reversible NADPH linked reduction of 3-dehydroshikimate (DHSA) to yield shikimate (SA). The chain is Shikimate dehydrogenase (NADP(+)) from Pseudomonas paraeruginosa (strain DSM 24068 / PA7) (Pseudomonas aeruginosa (strain PA7)).